Consider the following 648-residue polypeptide: Protein teflon (648 aa).

Residues L33–H56 form a C2H2-type 1 zinc finger. 2 disordered regions span residues S76 to N127 and E146 to S170. Over residues V85–S94 the composition is skewed to polar residues. Basic and acidic residues predominate over residues G96 to E107. The C2H2-type 2; degenerate zinc finger occupies Y598–Q620. The C2H2-type 3 zinc finger occupies Y624–H647.

It belongs to the Teflon family.

It is found in the nucleus. The protein localises to the chromosome. Functionally, specifically required in males for proper segregation of autosomal bivalents at meiosis I. Expression is required in the male germ line prior to spermatocyte stage S4. May have a role as a bridging molecule maintaining adhesion to hold autosome bivalents together via heterochromatic connections. This Drosophila yakuba (Fruit fly) protein is Protein teflon.